The chain runs to 556 residues: Phenylalanine--tRNA ligase beta subunit (556 aa).

The region spanning 274–349 is the B5 domain; it reads HEPEEMEVDL…ITLGLNKIGY (76 aa). Residues Asp-327, Asp-333, Glu-336, and Glu-337 each contribute to the Mg(2+) site.

The protein belongs to the phenylalanyl-tRNA synthetase beta subunit family. Type 2 subfamily. As to quaternary structure, tetramer of two alpha and two beta subunits. Mg(2+) serves as cofactor.

The protein resides in the cytoplasm. The catalysed reaction is tRNA(Phe) + L-phenylalanine + ATP = L-phenylalanyl-tRNA(Phe) + AMP + diphosphate + H(+). This chain is Phenylalanine--tRNA ligase beta subunit, found in Korarchaeum cryptofilum (strain OPF8).